We begin with the raw amino-acid sequence, 73 residues long: Large ribosomal subunit protein uL29 (73 aa).

Belongs to the universal ribosomal protein uL29 family.

The protein is Large ribosomal subunit protein uL29 of Synechococcus sp. (strain JA-2-3B'a(2-13)) (Cyanobacteria bacterium Yellowstone B-Prime).